The primary structure comprises 2040 residues: MDPIDEQEVNVYLPDSYLKGVISFSETNALGSCIIGRPFLKDDFTATTSIRNPLIEHKRIRDTKLVKNIVSNPQYRLVEPLQMQHELLSVLSPNFILHTANLRKIIQRSVDITDKKLNPILHILNLNSPNQEGKVSERLTRLIKKHLSHIPNWVSSWYNIWVNLNNLLQEYRSKEVIDHNCVLTRQLSGSFIHVVMSQYGVVIISKKSKRYTMCTYNQFLTWKDLALSRFNANYVVWLSNVLNTLNEGLGLRCRLKGHLLSKLYISTDIFLSSTSNEFYNVVKEFEGFIMSLILKQTEEALFSTRFYNNMLNNLIDAIDRARLEYLARCANSAARINLPSTDVMIASLGDILSLINVLGESNLNNLSELYFIFRIFGHPMVDERKAMDAVRDNCCETKFLTAKNLASLRGAYVYRIIKGFVANYNRWPYIKTRVCLTPTWINYLDTNSCPSLLEMTEDDFIVLAGVHFIREFHIPKLTDLEIILNDKAISPPKSLIWSCFPKNYIPQVIQDEYARRYCRAKAPLKTRRVLEFYLQDKDFKLDQLHRVVVNQDYLNDKEHIISLTGKERELGVGRMFAMQPGKQRQVQILAEKLLADNILQFFPETLTRYGDLELQKILELKAGLSNKNDRSKDSYNNYISRCSLITDLSKFNQAFRYESSCVCSDLLDELHGTQSLFSWLHLTVPLTTIMCTYRHAPPDTGNNYNVDDIAEQSGLYRYHMGGIEGWCQKLWTTEAIALLDTVAVKGRFQLTSLINGDNQSIDISKPTRLGTRTQSEADYDLAINSLRLISAAYKGIGHKLKEGETYLSRDMQFMSKTIQHEGVYYPASIKKILRVGPWINTILDDIKTSTESIGSLTQELEYKGESLMSSLLLRNFWLYRLYSVDLKDHSLCGKQLYRSLIKVLKHLKRCFNLENLGECLELFLNVPMQFGGADPNVIYRSFYRRTPDFLTESITHLILILKHFRRDLEFNKDNVSKAVLSLLEFTKNDSAEFVTLMRDPQAIGSERQAKITSDINRTAVTSVLSNAPNEIFRTSALHYSSTENELNGIASGVSPVYPHGLRVLYESLPFYKAEKIVNMVSGTKSITNILEKTSAISYTDIIRATNMMVENLTLLTRIMKPGADTSLDPDTIVITILSKIIRDKSWDVGDIIGVTSPSPVSCFKVVYTSTLQNNSVVIERYTTDTYTRGKRGPTKPWVGSSTQEKKSMPVYNRQVLTRGQRDQIENIAKLEWVFSSVANIDSLLNELSTMTLGLSLRKCRQLFPTYLSLNFLHRLSVSSRPREYPSSLPAYRTTNFHFDTGPINKVLTERFGDEDINLVFQNAISYGLSTMSLVEQFTGVCPNKVLLVPKLQEIQLMKVPIFQGGFNLQSIIPIIRQQHMFLPNHITPAQYIELFLSSKQFHSRINLKHNNRFKLVLQKDYFNGENMIETLSTCLAGHWIIILMLMKESQGIFDKEWYDGFVTDHMFLDLQLFLSSFKTFLTVFNFAYLKVGSNIEEITGNQANLLELLDLGYWKNMYKVFSETKVRLALLKQDLSFNSVKNSSSFRHWFINSLQEVQCTSVPWVVNVTRNPTHLKGVLQYMKMIESGMIQGYSANISSVLSIPYNYPDMAHMMTKIIRNRGHMSYDYPKMKKSLTFSMTDMSDSYMLNLFPKVECSYMSGYLDKLDDTLQLLKKPPVGRKVPSVALPWHHCNRYNFVFSSTGCKVSVIDMLPKHFRRSNLKVICFIGEGAGNLMLRAVLEVGGNIKLIYRSLKDPDDHHVPVEFLRLKPCYPYIDTGGSLSLASTDATNKAHWDYLHLHWTDPLNLIVCDAEISGVKHWLKILHRWYEHMTSCKHCLKSEHDKYLIIKYHAQDDLIDLPHGVRLLKCNICLGSKLSGSESYLLIGLGLSNKLPVYSEVLHSKLLLAECHQFHHPKYLDVSGINTNIKSLIPMLDYPITYNKITTLLESVRELSSNKNKNTMWIGRNPVYHNKWLKRKYFNILKWLKYCIELPAFRMDYNSFERIEMLYPNLRDLVDSVSTSELKKVIKVTGILFRSNTM.

Residues 640–822 (SRCSLITDLS…FMSKTIQHEG (183 aa)) form the RdRp catalytic domain. Residues aspartate 647 and aspartate 757 each contribute to the Mg(2+) site. The segment at 913–1395 (LENLGECLEL…ITPAQYIELF (483 aa)) is GDP polyribonucleotidyltransferase. The active-site Nucleophile; for GDP polyribonucleotidyltransferase activity is the histidine 1273. A Mononegavirus-type SAM-dependent 2'-O-MTase domain is found at 1694–1884 (RYNFVFSSTG…KLSGSESYLL (191 aa)). Lysine 1705 (for mRNA (nucleoside-2'-O-)-methyltransferase activity) is an active-site residue. 1728–1732 (GEGAG) lines the substrate pocket. Residues aspartate 1811, lysine 1849, and glutamate 1880 each act as for mRNA (nucleoside-2'-O-)-methyltransferase activity in the active site.

The protein belongs to the paramyxovirus L protein family. In terms of assembly, interacts with the phosphoprotein (via C-terminus); the association of P and L forms the polymerase complex. Mg(2+) is required as a cofactor.

It localises to the virion. It is found in the host cytoplasm. It carries out the reaction RNA(n) + a ribonucleoside 5'-triphosphate = RNA(n+1) + diphosphate. It catalyses the reaction GTP + H2O = GDP + phosphate + H(+). The enzyme catalyses a 5'-end triphospho-adenylyl-adenylyl-cytidylyl-adenosine in mRNA + GDP + H(+) = a 5'-end (5'-triphosphoguanosine)-adenylyl-adenylyl-cytidylyl-adenosine in mRNA + diphosphate. The catalysed reaction is a 5'-end (5'-triphosphoguanosine)-adenylyl-adenylyl-cytidylyl-adenosine in mRNA + 2 S-adenosyl-L-methionine = a 5'-end (N(7)-methyl 5'-triphosphoguanosine)-(2'-O-methyladenylyl)-adenylyl-cytidylyl-adenosine in mRNA + 2 S-adenosyl-L-homocysteine + H(+). It carries out the reaction a 5'-end (5'-triphosphoguanosine)-adenylyl-adenylyl-cytidylyl-adenosine in mRNA + S-adenosyl-L-methionine = a 5'-end (5'-triphosphoguanosine)-(2'-O-methyladenylyl)-adenylyl-cytidylyl-adenosine in mRNA + S-adenosyl-L-homocysteine + H(+). It catalyses the reaction a 5'-end (5'-triphosphoguanosine)-(2'-O-methyladenylyl)-adenylyl-cytidylyl-adenosine in mRNA + S-adenosyl-L-methionine = a 5'-end (N(7)-methyl 5'-triphosphoguanosine)-(2'-O-methyladenylyl)-adenylyl-cytidylyl-adenosine in mRNA + S-adenosyl-L-homocysteine. Functionally, responsible for RNA synthesis (replicase and transcriptase), cap addition, and cap methylation. Also performs the polyadenylation of subgenomic mRNAs by a stuttering mechanism at a slipery stop site present at the end of viral genes. The template is composed of the viral RNA tightly encapsidated by the nucleoprotein (N). The viral polymerase binds to the genomic RNA at two different sites in the 3' leader promoter thereby initiating either genome replication or mRNA transcription. In the transcription mode, the polymerase performs the sequential transcription of all mRNAs using a termination-reinitiation mechanism responding to gene start and gene end signals. Some polymerase disengage from the template at each gene junction, resulting in a decreasing abundance of transcripts from the 3' to the 5' end of the genome. The first gene is the most transcribed, and the last the least transcribed. Needs as cofactors the phosphoprotein for processivity and the M2-1 anti-termination protein. Polyribonucleotidyl transferase (PRNTase) adds the cap structure when the nascent RNA chain length has reached few nucleotides. Ribose 2'-O methylation of viral mRNA cap precedes and facilitates subsequent guanine-N-7 methylation. In the replication mode, the polymerase replicates the whole viral genome without recognizing the gene end transcriptional signals. The ability of the polymerase to override the gene end signals as it is producing the antigenome is probably due to replicative RNA becoming encapsidated with nucleoprotein as it is synthesized. The sequence is that of RNA-directed RNA polymerase L (L) from Murine pneumonia virus (strain 15) (MPV).